A 133-amino-acid polypeptide reads, in one-letter code: MAQMMTLSLLSLVLALCIPWTQGSDGGGQDCCLKYSQKKIPYSIVRGYRKQEPSLGCPIPAILFSPRKHSKPELCANPEEGWVQNLMRRLDQPPAPGKQSPGCRKNRGTSKSGKKGKGSKGCKRTEQTQPSRG.

The first 23 residues, 1 to 23, serve as a signal peptide directing secretion; that stretch reads MAQMMTLSLLSLVLALCIPWTQG. Cystine bridges form between Cys-31–Cys-57, Cys-32–Cys-75, and Cys-103–Cys-122. The disordered stretch occupies residues 86 to 133; the sequence is LMRRLDQPPAPGKQSPGCRKNRGTSKSGKKGKGSKGCKRTEQTQPSRG. A C-terminal basic extension region spans residues 98 to 133; that stretch reads KQSPGCRKNRGTSKSGKKGKGSKGCKRTEQTQPSRG. Residues 104 to 122 are compositionally biased toward basic residues; sequence RKNRGTSKSGKKGKGSKGC.

It belongs to the intercrine beta (chemokine CC) family. As to quaternary structure, binds to CCR7 and to CXCR3. Interacts with PDPN; relocalizes PDPN to the basolateral membrane. Interacts with GPR174. In terms of tissue distribution, expressed strongly in lung, spleen, thymus, peripheral and mesentric lymph nodes. Also expressed in the testis, kidney, liver, and heart.

Its subcellular location is the secreted. In terms of biological role, inhibits hemopoiesis and stimulates chemotaxis. Chemotactic in vitro for thymocytes and activated T-cells, but not for B-cells, macrophages, or neutrophils. Potent mesangial cell chemoattractant. Shows preferential activity towards naive T-cells. May play a role in mediating homing of lymphocytes to secondary lymphoid organs. The protein is C-C motif chemokine 21a (Ccl21a) of Mus musculus (Mouse).